Here is a 168-residue protein sequence, read N- to C-terminus: Photosystem I assembly protein Ycf3 (168 aa).

3 TPR repeats span residues 35–68 (AFTYYRDGMSAQSEGNYAEALQNYYEATRLEIDP), 72–105 (SYILYNIGLIHTSNGEHTKALEYYFRALERNPFL), and 120–153 (GEQAIRQGDSEIAEAWSDQAAEYWKQAISLTPGN).

It belongs to the Ycf3 family.

It localises to the plastid. The protein resides in the chloroplast thylakoid membrane. In terms of biological role, essential for the assembly of the photosystem I (PSI) complex. May act as a chaperone-like factor to guide the assembly of the PSI subunits. This is Photosystem I assembly protein Ycf3 from Piper cenocladum (Ant piper).